The sequence spans 285 residues: uncharacterized protein (285 aa).

Helical transmembrane passes span 7–29, 49–71, 95–117, 137–156, 232–254, and 259–281; these read FYRLVKNTLLTAFILSLILLTLQ, LVVWNAYYTYFFIPEGVILSTFF, IFLYCSIPFLTFFLISALLSNTL, FFSEVPAGTFVSFGAVVLHA, KVVNYVNVATLPLFFFLSFTVAL, and GGLSYYAFASLFIVVHQLIIFVV.

It is found in the cell membrane. This is an uncharacterized protein from Aquifex aeolicus (strain VF5).